A 434-amino-acid chain; its full sequence is Double-stranded RNA-binding protein 2 (434 aa).

DRBM domains lie at 1–70 (MYKN…ALSN) and 87–155 (VYKN…SLKQ). Residues 402–434 (EKTASKETERAEFKDSSKGEPETARERLENLKI) are disordered.

In terms of assembly, heterodimer with DRB1 or DRB5. Interacts with DCL1 and DCL5.

Its subcellular location is the cytoplasm. In terms of biological role, binds double-stranded RNA. May be involved in RNA-mediated silencing. This chain is Double-stranded RNA-binding protein 2 (DRB2), found in Arabidopsis thaliana (Mouse-ear cress).